The following is a 606-amino-acid chain: Phosphoenolpyruvate carboxykinase [GTP] (606 aa).

Residues arginine 79 and 218–220 (YGG) each bind substrate. The Mn(2+) site is built by lysine 227 and histidine 247. Position 269 (serine 269) interacts with substrate. 270–275 (ACGKTN) lines the GTP pocket. Cysteine 271 is an active-site residue. Aspartate 294 lines the Mn(2+) pocket. 384 to 386 (NSR) is a binding site for substrate. GTP is bound by residues arginine 386, arginine 417, and 512-515 (FGEN).

The protein belongs to the phosphoenolpyruvate carboxykinase [GTP] family. As to quaternary structure, monomer. Mn(2+) serves as cofactor.

The protein resides in the cytoplasm. The catalysed reaction is oxaloacetate + GTP = phosphoenolpyruvate + GDP + CO2. It participates in carbohydrate biosynthesis; gluconeogenesis. In terms of biological role, catalyzes the conversion of oxaloacetate (OAA) to phosphoenolpyruvate (PEP), the rate-limiting step in the metabolic pathway that produces glucose from lactate and other precursors derived from the citric acid cycle. This chain is Phosphoenolpyruvate carboxykinase [GTP], found in Corynebacterium jeikeium (strain K411).